A 1009-amino-acid polypeptide reads, in one-letter code: C2 domain-containing protein aex-1 (1009 aa).

The C2 domain maps to 812–945 (NAPHVDVHIS…ASEEKPTQRL (134 aa)).

It belongs to the unc-13 family. As to expression, expressed in intestine, body wall muscles and some amphid neurons.

Functionally, involved in retrograde signaling from post-synaptic cells to pre-synaptic neurons, probably by regulating vesicle exocytosis in post-synaptic cells. Acts in muscles, to regulate the localization of synaptic vesicle fusion protein unc-13 likely during vesicle exocytosis and thus regulate retrograde signaling at the neuromuscular junction (NMJ). Regulates anterior body muscle contractions (aBOC) and the expulsion steps during the defecation motor program (DMP). Probably by regulating DMP, plays a homeostatic role in the uptake of triglycerides. Regulates locomotion. This is C2 domain-containing protein aex-1 from Caenorhabditis elegans.